The primary structure comprises 359 residues: 3-dehydroshikimate dehydratase (359 aa).

Belongs to the bacterial two-domain DSD family. As to quaternary structure, monomer.

The catalysed reaction is 3-dehydroshikimate = 3,4-dihydroxybenzoate + H2O. The protein operates within aromatic compound metabolism; 3,4-dihydroxybenzoate biosynthesis; 3,4-dihydroxybenzoate from 3-dehydroquinate: step 2/2. With respect to regulation, divalent cations such as Mg(2+), but also MO(2+), Mn(2+), Ba(2+), and Co(2+) activate the enzyme, whereas monovalent cations as K(+), Na(+), and NH4(+) decrease its activity slightly. In terms of biological role, 3-dehydroshikimate dehydratase; part of the qa gene cluster that mediates the catabolism of quinic acid (QA) and as such, allows the use of QA as a sole carbon source. Catalyzes the third reaction in the inducible quinic acid catabolic pathway by converting dehydroshikimate to protocatechuate. The qa cluster encodes 3 inducible enymes (qa-2, qa-3 and qa-4) catalyzing the first three reactions in the catabolism of quinic acid to protocatechuic acid (also known as 3,4-Dihydroxybenzoic acid). The chain is 3-dehydroshikimate dehydratase from Neurospora crassa (strain ATCC 24698 / 74-OR23-1A / CBS 708.71 / DSM 1257 / FGSC 987).